A 347-amino-acid chain; its full sequence is Probable E3 ubiquitin-protein ligase DTX3 (347 aa).

The segment at 113 to 157 is disordered; that stretch reads EHPEMHRAGPPPLRAAPLLPPGARGLPPPPPPLPPPLPPRLREEA. Residues 121–151 are compositionally biased toward pro residues; the sequence is GPPPLRAAPLLPPGARGLPPPPPPLPPPLPP. The segment at 164–205 adopts an RING-type zinc-finger fold; it reads CPICLGEIQNAKTLEKCRHSFCEGCITRALQVKKACPMCGRF.

Belongs to the Deltex family. As to quaternary structure, homodimer. May form a heterodimers with other members of the Deltex family. Interacts with NOTCH1.

It localises to the cytoplasm. The enzyme catalyses S-ubiquitinyl-[E2 ubiquitin-conjugating enzyme]-L-cysteine + [acceptor protein]-L-lysine = [E2 ubiquitin-conjugating enzyme]-L-cysteine + N(6)-ubiquitinyl-[acceptor protein]-L-lysine.. Its pathway is protein modification; protein ubiquitination. Regulator of Notch signaling, a signaling pathway involved in cell-cell communications that regulates a broad spectrum of cell-fate determinations. Probably acts both as a positive and negative regulator of Notch, depending on the developmental and cell context. Functions as an ubiquitin ligase protein in vitro, suggesting that it may regulate the Notch pathway via some ubiquitin ligase activity. This Homo sapiens (Human) protein is Probable E3 ubiquitin-protein ligase DTX3 (DTX3).